The following is a 98-amino-acid chain: Pancreatic polypeptide prohormone (98 aa).

The signal sequence occupies residues 1–29 (MAVAYYCLSLFLLSTWVALLLQPLQGAWG). The residue at position 65 (tyrosine 65) is a Tyrosine amide.

Belongs to the NPY family. No icosapeptide-like peptide is cleaved from the C-terminal.

Its subcellular location is the secreted. In terms of biological role, hormone secreted by pancreatic cells that acts as a regulator of pancreatic and gastrointestinal functions probably by signaling through the G protein-coupled receptor NPY4R2. The chain is Pancreatic polypeptide prohormone (Ppy) from Rattus norvegicus (Rat).